The following is a 102-amino-acid chain: Co-chaperonin GroES (102 aa).

Belongs to the GroES chaperonin family. In terms of assembly, heptamer of 7 subunits arranged in a ring. Interacts with the chaperonin GroEL.

The protein localises to the cytoplasm. Together with the chaperonin GroEL, plays an essential role in assisting protein folding. The GroEL-GroES system forms a nano-cage that allows encapsulation of the non-native substrate proteins and provides a physical environment optimized to promote and accelerate protein folding. GroES binds to the apical surface of the GroEL ring, thereby capping the opening of the GroEL channel. This is Co-chaperonin GroES from Chlamydia trachomatis serovar D (strain ATCC VR-885 / DSM 19411 / UW-3/Cx).